Consider the following 379-residue polypeptide: Glutamate 5-kinase (379 aa).

ATP is bound at residue lysine 14. 3 residues coordinate substrate: serine 54, aspartate 141, and asparagine 153. ATP contacts are provided by residues 173 to 174 (TD) and 215 to 221 (TGGMATK). The PUA domain occupies 280 to 358 (KGRLLLDIGA…DEIEPLLGYD (79 aa)).

It belongs to the glutamate 5-kinase family.

Its subcellular location is the cytoplasm. The enzyme catalyses L-glutamate + ATP = L-glutamyl 5-phosphate + ADP. It functions in the pathway amino-acid biosynthesis; L-proline biosynthesis; L-glutamate 5-semialdehyde from L-glutamate: step 1/2. In terms of biological role, catalyzes the transfer of a phosphate group to glutamate to form L-glutamate 5-phosphate. In Shewanella amazonensis (strain ATCC BAA-1098 / SB2B), this protein is Glutamate 5-kinase.